A 529-amino-acid polypeptide reads, in one-letter code: Peptide chain release factor 3 (529 aa).

Positions 11–280 constitute a tr-type G domain; that stretch reads AKRRTFAIIS…GLVEWAPAPM (270 aa). Residues 20–27, 88–92, and 142–145 each bind GTP; these read SHPDAGKT, DTPGH, and NKLD.

The protein belongs to the TRAFAC class translation factor GTPase superfamily. Classic translation factor GTPase family. PrfC subfamily.

The protein localises to the cytoplasm. Increases the formation of ribosomal termination complexes and stimulates activities of RF-1 and RF-2. It binds guanine nucleotides and has strong preference for UGA stop codons. It may interact directly with the ribosome. The stimulation of RF-1 and RF-2 is significantly reduced by GTP and GDP, but not by GMP. The protein is Peptide chain release factor 3 of Shigella boydii serotype 18 (strain CDC 3083-94 / BS512).